A 325-amino-acid chain; its full sequence is NADH-quinone oxidoreductase subunit H (325 aa).

Transmembrane regions (helical) follow at residues 11–31 (ILLS…CGAF), 50–69 (NRVG…KMFF), 81–101 (VIFT…FAIV), 114–134 (IGIL…LFAG), 154–174 (LSYE…AGSF), 186–206 (IWNV…GVAV), 237–257 (FFVG…TLFF), 265–285 (LPPF…FILI), and 304–324 (VCLP…LWQA).

The protein belongs to the complex I subunit 1 family. In terms of assembly, NDH-1 is composed of 13 different subunits. Subunits NuoA, H, J, K, L, M, N constitute the membrane sector of the complex.

The protein localises to the cell inner membrane. The enzyme catalyses a quinone + NADH + 5 H(+)(in) = a quinol + NAD(+) + 4 H(+)(out). In terms of biological role, NDH-1 shuttles electrons from NADH, via FMN and iron-sulfur (Fe-S) centers, to quinones in the respiratory chain. The immediate electron acceptor for the enzyme in this species is believed to be ubiquinone. Couples the redox reaction to proton translocation (for every two electrons transferred, four hydrogen ions are translocated across the cytoplasmic membrane), and thus conserves the redox energy in a proton gradient. This subunit may bind ubiquinone. This Citrobacter koseri (strain ATCC BAA-895 / CDC 4225-83 / SGSC4696) protein is NADH-quinone oxidoreductase subunit H.